Reading from the N-terminus, the 163-residue chain is uncharacterized protein (163 aa).

The segment at 142-163 (PQIVISEHNNTKETSPSRQFEH) is disordered. Over residues 153 to 163 (KETSPSRQFEH) the composition is skewed to polar residues.

This sequence belongs to the RCAN family.

Functionally, inhibits calcineurin-dependent transcriptional responses by binding to the catalytic domain of calcineurin. This is an uncharacterized protein from Schizosaccharomyces pombe (strain 972 / ATCC 24843) (Fission yeast).